The following is a 374-amino-acid chain: UDP-N-acetylglucosamine--N-acetylmuramyl-(pentapeptide) pyrophosphoryl-undecaprenol N-acetylglucosamine transferase (374 aa).

UDP-N-acetyl-alpha-D-glucosamine-binding positions include 10–12 (TGG), N124, R166, S196, and Q294.

It belongs to the glycosyltransferase 28 family. MurG subfamily.

The protein localises to the cell membrane. It carries out the reaction di-trans,octa-cis-undecaprenyl diphospho-N-acetyl-alpha-D-muramoyl-L-alanyl-D-glutamyl-meso-2,6-diaminopimeloyl-D-alanyl-D-alanine + UDP-N-acetyl-alpha-D-glucosamine = di-trans,octa-cis-undecaprenyl diphospho-[N-acetyl-alpha-D-glucosaminyl-(1-&gt;4)]-N-acetyl-alpha-D-muramoyl-L-alanyl-D-glutamyl-meso-2,6-diaminopimeloyl-D-alanyl-D-alanine + UDP + H(+). Its pathway is cell wall biogenesis; peptidoglycan biosynthesis. Functionally, cell wall formation. Catalyzes the transfer of a GlcNAc subunit on undecaprenyl-pyrophosphoryl-MurNAc-pentapeptide (lipid intermediate I) to form undecaprenyl-pyrophosphoryl-MurNAc-(pentapeptide)GlcNAc (lipid intermediate II). In Symbiobacterium thermophilum (strain DSM 24528 / JCM 14929 / IAM 14863 / T), this protein is UDP-N-acetylglucosamine--N-acetylmuramyl-(pentapeptide) pyrophosphoryl-undecaprenol N-acetylglucosamine transferase.